We begin with the raw amino-acid sequence, 116 residues long: Large ribosomal subunit protein bL17 (116 aa).

This sequence belongs to the bacterial ribosomal protein bL17 family. Part of the 50S ribosomal subunit. Contacts protein L32.

This is Large ribosomal subunit protein bL17 from Prochlorococcus marinus (strain MIT 9515).